A 507-amino-acid chain; its full sequence is TOM1-like protein 2 (507 aa).

Residues 20–152 form the VHS domain; that stretch reads ATDGSLQSED…ELKRKGVEFP (133 aa). Serine 160 carries the phosphoserine modification. The disordered stretch occupies residues 162–210; that stretch reads IHTPQRSVPEVDPAATMPRSQSQQRTSAGSYSSPPPAPYSAPQAPALSV. Threonine 164 carries the post-translational modification Phosphothreonine. The GAT domain occupies 219-307; sequence EQIARLRSEL…VFLRYERFER (89 aa). The Clathrin-binding motif lies at 329-334; sequence NLIDLG. Residues 467 to 507 are disordered; the sequence is RAKAAEMVPDLPSPPMEAPAPASNPSGRKKPERSEDALFAL. A compositionally biased stretch (basic and acidic residues) spans 498-507; sequence ERSEDALFAL.

Belongs to the TOM1 family. In terms of assembly, interacts with clathrin, SRC and TOLLIP. Interacts with MYO6. In terms of tissue distribution, ubiquitously expressed with higher expression in heart and skeletal muscle.

Functionally, acts as a MYO6/Myosin VI adapter protein that targets myosin VI to endocytic structures. May also play a role in recruiting clathrin to endosomes. May regulate growth factor-induced mitogenic signaling. This is TOM1-like protein 2 (TOM1L2) from Homo sapiens (Human).